The chain runs to 292 residues: 1D-myo-inositol 2-acetamido-2-deoxy-alpha-D-glucopyranoside deacetylase (292 aa).

3 residues coordinate Zn(2+): His12, Asp15, and His147.

The protein belongs to the MshB deacetylase family. Zn(2+) is required as a cofactor.

It catalyses the reaction 1D-myo-inositol 2-acetamido-2-deoxy-alpha-D-glucopyranoside + H2O = 1D-myo-inositol 2-amino-2-deoxy-alpha-D-glucopyranoside + acetate. Catalyzes the deacetylation of 1D-myo-inositol 2-acetamido-2-deoxy-alpha-D-glucopyranoside (GlcNAc-Ins) in the mycothiol biosynthesis pathway. This Rhodococcus jostii (strain RHA1) protein is 1D-myo-inositol 2-acetamido-2-deoxy-alpha-D-glucopyranoside deacetylase.